The chain runs to 321 residues: Acetylglutamate kinase (321 aa).

Residues 88–89, Arg110, and Asn216 contribute to the substrate site; that span reads GG.

Belongs to the acetylglutamate kinase family. ArgB subfamily.

Its subcellular location is the cytoplasm. It carries out the reaction N-acetyl-L-glutamate + ATP = N-acetyl-L-glutamyl 5-phosphate + ADP. Its pathway is amino-acid biosynthesis; L-arginine biosynthesis; N(2)-acetyl-L-ornithine from L-glutamate: step 2/4. Catalyzes the ATP-dependent phosphorylation of N-acetyl-L-glutamate. This Ehrlichia chaffeensis (strain ATCC CRL-10679 / Arkansas) protein is Acetylglutamate kinase.